Consider the following 249-residue polypeptide: uncharacterized protein (249 aa).

The protein resides in the cytoplasm. Its subcellular location is the nucleus. It localises to the nucleolus. This is an uncharacterized protein from Schizosaccharomyces pombe (strain 972 / ATCC 24843) (Fission yeast).